Reading from the N-terminus, the 157-residue chain is MLKIYEDIINEVISRLEQVEDEVSIGKSAIHELRNEWRERLIEYTQSEWDGERMRRRDGEQGYHGYERLSEGPAHAFGGKPTTAKDPGMFEDYGSSDVSSGDSEIIGTKGSTGNCMVCLYVKVNMSKGKWKCTFKQGFISIGNIDFVFNSAQGELEW.

The protein belongs to the TFIIA subunit 1 family. In terms of assembly, TFIIA is a heterodimer of the large subunit and the small subunit gamma.

It is found in the nucleus. In terms of biological role, TFIIA is a component of the transcription machinery of RNA polymerase II and plays an important role in transcriptional activation. The protein is Transcription initiation factor IIA large subunit (TOA1) of Encephalitozoon cuniculi (strain GB-M1) (Microsporidian parasite).